Consider the following 207-residue polypeptide: Urease accessory protein UreG (207 aa).

Residue 12-19 (GPVGAGKT) participates in GTP binding.

It belongs to the SIMIBI class G3E GTPase family. UreG subfamily. Homodimer. UreD, UreF and UreG form a complex that acts as a GTP-hydrolysis-dependent molecular chaperone, activating the urease apoprotein by helping to assemble the nickel containing metallocenter of UreC. The UreE protein probably delivers the nickel.

The protein localises to the cytoplasm. Facilitates the functional incorporation of the urease nickel metallocenter. This process requires GTP hydrolysis, probably effectuated by UreG. The polypeptide is Urease accessory protein UreG (Cereibacter sphaeroides (strain ATCC 17023 / DSM 158 / JCM 6121 / CCUG 31486 / LMG 2827 / NBRC 12203 / NCIMB 8253 / ATH 2.4.1.) (Rhodobacter sphaeroides)).